Here is a 73-residue protein sequence, read N- to C-terminus: U3-agatoxin-Ao1k (73 aa).

A signal peptide spans 1–20 (MRTIISLLLLSAMVFAVIEA). Residues 21 to 34 (ISLEEGLQLFEGER) constitute a propeptide that is removed on maturation. Cystine bridges form between C36-C52, C43-C57, C51-C67, and C59-C65. The residue at position 71 (S71) is a Serine amide.

Belongs to the neurotoxin 07 (Beta/delta-agtx) family. 03 (aga-4) subfamily. Aga sub-subfamily. Expressed by the venom gland.

It is found in the secreted. Its function is as follows. Insecticidal neurotoxin that modulates the insect Nav channel (DmNaV1/tipE (para/tipE)) in a unique manner, with both the activation and inactivation processes being affected. The voltage dependence of activation is shifted toward more hyperpolarized potentials (analogous to site 4 toxins) and a non-inactivating persistent sodium current is induced (site 3-like action). Interestingly, both effects take place in a voltage-dependent manner, producing a bell-shaped curve between -80 and 0 mV. Compared to beta/delta-agatoxin-1 to -3, this toxin appears to affect the insect sodium channel only weakly. This is U3-agatoxin-Ao1k from Agelena orientalis (Funnel-web spider).